The following is a 1102-amino-acid chain: DNA-directed RNA polymerase subunit beta (1102 aa).

A disordered region spans residues 1081-1102; that stretch reads LPGKRTPSRPIYESLSTEGNQD.

This sequence belongs to the RNA polymerase beta chain family. In terms of assembly, in cyanobacteria the RNAP catalytic core is composed of 2 alpha, 1 beta, 1 beta', 1 gamma and 1 omega subunit. When a sigma factor is associated with the core the holoenzyme is formed, which can initiate transcription.

The catalysed reaction is RNA(n) + a ribonucleoside 5'-triphosphate = RNA(n+1) + diphosphate. DNA-dependent RNA polymerase catalyzes the transcription of DNA into RNA using the four ribonucleoside triphosphates as substrates. In Trichodesmium erythraeum (strain IMS101), this protein is DNA-directed RNA polymerase subunit beta.